A 478-amino-acid polypeptide reads, in one-letter code: Protein nucleotidyltransferase YdiU (478 aa).

The ATP site is built by Gly84, Gly86, Arg87, Lys107, Asp119, Gly120, Arg170, and Arg177. Asp246 acts as the Proton acceptor in catalysis. Mg(2+)-binding residues include Asn247 and Asp256. Residue Asp256 participates in ATP binding.

It belongs to the SELO family. The cofactor is Mg(2+). Requires Mn(2+) as cofactor.

It carries out the reaction L-seryl-[protein] + ATP = 3-O-(5'-adenylyl)-L-seryl-[protein] + diphosphate. The enzyme catalyses L-threonyl-[protein] + ATP = 3-O-(5'-adenylyl)-L-threonyl-[protein] + diphosphate. The catalysed reaction is L-tyrosyl-[protein] + ATP = O-(5'-adenylyl)-L-tyrosyl-[protein] + diphosphate. It catalyses the reaction L-histidyl-[protein] + UTP = N(tele)-(5'-uridylyl)-L-histidyl-[protein] + diphosphate. It carries out the reaction L-seryl-[protein] + UTP = O-(5'-uridylyl)-L-seryl-[protein] + diphosphate. The enzyme catalyses L-tyrosyl-[protein] + UTP = O-(5'-uridylyl)-L-tyrosyl-[protein] + diphosphate. Its function is as follows. Nucleotidyltransferase involved in the post-translational modification of proteins. It can catalyze the addition of adenosine monophosphate (AMP) or uridine monophosphate (UMP) to a protein, resulting in modifications known as AMPylation and UMPylation. In Escherichia coli O6:K15:H31 (strain 536 / UPEC), this protein is Protein nucleotidyltransferase YdiU.